The following is a 189-amino-acid chain: MTIKSDKWIRRMAQQHGMIEPFEPGQIRQDANGNKIVSYGTSSYGYDIRCAPEFKVFTNIHSTVVDPKNFDEKSFVDFHGDSCIIPPNSFALARTMEYFRIPRNVLTICLGKSTYARCGIIVNVTPFEPEWEGYVTLEFSNTTPLPAKIYAGEGCAQVLFFESDEECETSYKDRGGKYQGQVGVTLPRA.

DCTP is bound by residues 112 to 117, 136 to 138, Q157, Y171, and Q181; these read KSTYAR and TLE. Catalysis depends on E138, which acts as the Proton donor/acceptor.

It belongs to the dCTP deaminase family. As to quaternary structure, homotrimer.

It carries out the reaction dCTP + H2O + H(+) = dUTP + NH4(+). Its pathway is pyrimidine metabolism; dUMP biosynthesis; dUMP from dCTP (dUTP route): step 1/2. Its function is as follows. Catalyzes the deamination of dCTP to dUTP. The sequence is that of dCTP deaminase from Albidiferax ferrireducens (strain ATCC BAA-621 / DSM 15236 / T118) (Rhodoferax ferrireducens).